The primary structure comprises 138 residues: Small ribosomal subunit protein uS9 (138 aa).

This sequence belongs to the universal ribosomal protein uS9 family.

The protein is Small ribosomal subunit protein uS9 (rps9) of Sulfolobus acidocaldarius (strain ATCC 33909 / DSM 639 / JCM 8929 / NBRC 15157 / NCIMB 11770).